The primary structure comprises 213 residues: tRNA (guanine-N(7)-)-methyltransferase (213 aa).

S-adenosyl-L-methionine-binding residues include glutamate 44, glutamate 69, asparagine 96, and aspartate 118. Aspartate 118 is a catalytic residue. Residue lysine 122 coordinates substrate. Residues 124-129 are interaction with RNA; the sequence is RHEKRR. Substrate-binding positions include aspartate 154 and 192–195; that span reads TEYE.

It belongs to the class I-like SAM-binding methyltransferase superfamily. TrmB family.

The enzyme catalyses guanosine(46) in tRNA + S-adenosyl-L-methionine = N(7)-methylguanosine(46) in tRNA + S-adenosyl-L-homocysteine. The protein operates within tRNA modification; N(7)-methylguanine-tRNA biosynthesis. Its function is as follows. Catalyzes the formation of N(7)-methylguanine at position 46 (m7G46) in tRNA. The chain is tRNA (guanine-N(7)-)-methyltransferase from Latilactobacillus sakei subsp. sakei (strain 23K) (Lactobacillus sakei subsp. sakei).